We begin with the raw amino-acid sequence, 513 residues long: GMP synthase [glutamine-hydrolyzing] (513 aa).

Residues 3–200 form the Glutamine amidotransferase type-1 domain; sequence SVLVLDFGSQ…LIDIAGITPD (198 aa). Cys80 acts as the Nucleophile in catalysis. Active-site residues include His174 and Glu176. Residues 201–388 form the GMPS ATP-PPase domain; that stretch reads WSPKHFIDHQ…LGIAEDILMR (188 aa). Residue 228 to 234 participates in ATP binding; that stretch reads SGGVDSS.

Homodimer.

The catalysed reaction is XMP + L-glutamine + ATP + H2O = GMP + L-glutamate + AMP + diphosphate + 2 H(+). Its pathway is purine metabolism; GMP biosynthesis; GMP from XMP (L-Gln route): step 1/1. Catalyzes the synthesis of GMP from XMP. This chain is GMP synthase [glutamine-hydrolyzing], found in Chlorobium limicola (strain DSM 245 / NBRC 103803 / 6330).